The sequence spans 360 residues: MFLWLAHFSNWLTGLNIFQYTTFRAVMAALTALAFSLMFGPWTIRRLTALKCGQAVRTDGPQTHLVKNGTPTMGGSLILTAITVSTLLWGNWANPYIWILLGVLLATGALGFYDDWRKVVYKDPNGVSAKFKMVWQSSVAVIAGLALFYLAANSANNILIVPFFKQIALPLGVVGFLVLSYLTIVGTSNAVNLTDGLDGLAAFPVVLVAAGLAIFAYVSGHYQFSQYLQLPYVAGANEVAIFCTAMCGACLGFLWFNAYPAQVFMGDVGALALGAALGTVAVIVRQEFVLVIMGGLFVVEAVSVMLQVGWYKKTKKRIFLMAPIHHHYEQKGWKETQVVVRFWIITIVLVLIGLSTLKIR.

10 consecutive transmembrane segments (helical) span residues 24–44, 69–89, 92–112, 133–153, 158–178, 199–219, 239–259, 263–283, 288–308, and 337–357; these read RAVM…PWTI, GTPT…TLLW, WANP…ALGF, MVWQ…LAAN, ILIV…GFLV, GLAA…AYVS, VAIF…FNAY, VFMG…VAVI, FVLV…MLQV, and QVVV…LSTL.

Belongs to the glycosyltransferase 4 family. MraY subfamily. Requires Mg(2+) as cofactor.

It is found in the cell inner membrane. It carries out the reaction UDP-N-acetyl-alpha-D-muramoyl-L-alanyl-gamma-D-glutamyl-meso-2,6-diaminopimeloyl-D-alanyl-D-alanine + di-trans,octa-cis-undecaprenyl phosphate = di-trans,octa-cis-undecaprenyl diphospho-N-acetyl-alpha-D-muramoyl-L-alanyl-D-glutamyl-meso-2,6-diaminopimeloyl-D-alanyl-D-alanine + UMP. The protein operates within cell wall biogenesis; peptidoglycan biosynthesis. Functionally, catalyzes the initial step of the lipid cycle reactions in the biosynthesis of the cell wall peptidoglycan: transfers peptidoglycan precursor phospho-MurNAc-pentapeptide from UDP-MurNAc-pentapeptide onto the lipid carrier undecaprenyl phosphate, yielding undecaprenyl-pyrophosphoryl-MurNAc-pentapeptide, known as lipid I. This Neisseria gonorrhoeae (strain ATCC 700825 / FA 1090) protein is Phospho-N-acetylmuramoyl-pentapeptide-transferase.